The sequence spans 87 residues: Large ribosomal subunit protein eL31 (87 aa).

This sequence belongs to the eukaryotic ribosomal protein eL31 family.

This Methanosphaerula palustris (strain ATCC BAA-1556 / DSM 19958 / E1-9c) protein is Large ribosomal subunit protein eL31.